Here is a 456-residue protein sequence, read N- to C-terminus: Asparagine--tRNA ligase (456 aa).

It belongs to the class-II aminoacyl-tRNA synthetase family. In terms of assembly, homodimer.

Its subcellular location is the cytoplasm. The enzyme catalyses tRNA(Asn) + L-asparagine + ATP = L-asparaginyl-tRNA(Asn) + AMP + diphosphate + H(+). The sequence is that of Asparagine--tRNA ligase from Mycoplasma genitalium (strain ATCC 33530 / DSM 19775 / NCTC 10195 / G37) (Mycoplasmoides genitalium).